The chain runs to 346 residues: MVNIGVVGATGQGRQVMRNLLEQRNFPATSVRFFASPRSEGKKLTFRGQEIEVENAETADPSGLDIALFSAGATMSRVQAPRFAEAGVIVVDNSSAFRKDPDVPLVVSEVNFDRDVRGKKLAKGIIANPNCTTMAAMPVLKPLHEEAGLQRLIVSSYQAVSGSGIAGVEELAGQARPVIDGVEQLVHDGSALQYPAPNKYVAPIAFNIVPLAGNYVDDGSGETDEDQKLRNESRKILGIPELLVSGTCVRVPVFSGHSLSINAEFSQPISVERTKELLSAAAGVKLVDVPTPLAAAGIDDCLVGRIRQDPGVPDGRGLALFVSGDNLRKGAALNTIQIAELLAADL.

Residues 10–13 and 38–39 contribute to the NADP(+) site; these read TGQG and RS. Residue Arg98 coordinates phosphate. The Acyl-thioester intermediate role is filled by Cys131. Gln158 serves as a coordination point for substrate. Position 161–162 (161–162) interacts with NADP(+); it reads SG. Lys228 lines the phosphate pocket. Arg250 serves as a coordination point for substrate. His257 (proton acceptor) is an active-site residue. NADP(+) is bound at residue Asn326.

This sequence belongs to the aspartate-semialdehyde dehydrogenase family. As to quaternary structure, homodimer.

It carries out the reaction L-aspartate 4-semialdehyde + phosphate + NADP(+) = 4-phospho-L-aspartate + NADPH + H(+). It functions in the pathway amino-acid biosynthesis; L-lysine biosynthesis via DAP pathway; (S)-tetrahydrodipicolinate from L-aspartate: step 2/4. It participates in amino-acid biosynthesis; L-methionine biosynthesis via de novo pathway; L-homoserine from L-aspartate: step 2/3. Its pathway is amino-acid biosynthesis; L-threonine biosynthesis; L-threonine from L-aspartate: step 2/5. In terms of biological role, catalyzes the NADPH-dependent formation of L-aspartate-semialdehyde (L-ASA) by the reductive dephosphorylation of L-aspartyl-4-phosphate. This Mycolicibacterium smegmatis (Mycobacterium smegmatis) protein is Aspartate-semialdehyde dehydrogenase.